The chain runs to 642 residues: MPVITLPDGSQRHYDHAVSPMDVALDIGPGLAKACIAGRVNGELVDACDLIENDAQLSIITAKDEEGLEIIRHSCAHLLGHAIKQLWPHTKMAIGPVIDNGFYYDVDLDRTLTQEDVEALEKRMHELAEKNYDVIKKKVSWHEARETFANRGESYKVSILDENIAHDDKPGLYFHEEYVDMCRGPHVPNMRFCHHFKLMKTAGAYWRGDSNNKMLQRIYGTAWADKKALNAYLQRLEEAAKRDHRKIGKQLDLYHMQEEAPGMVFWHNDGWTIFRELEVFVRSKLKEYQYQEVKGPFMMDRVLWEKTGHWDNYKDAMFTTSSENREYCIKPMNCPGHVQIFNQGLKSYRDLPLRMAEFGSCHRNEPSGSLHGLMRVRGFTQDDAHIFCTEEQIRDEVNGCIRLVYDMYSTFGFEKIVVKLSTRPEKRIGSDEMWDRAEADLAVALEENNIPFEYQLGEGAFYGPKIEFTLYDCLDRAWQCGTVQLDFSLPSRLSASYVGEDNERKVPVMIHRAILGSMERFIGILTEEFAGFFPTWLAPVQVVIMNITDSQSEYVNELTQKLSNAGIRVKADLRNEKIGFKIREHTLRRVPYMLVCGDKEVESGKVAVRTRRGKDLGSMDVNEVIEKLQQEIRSRSLKQLEE.

The 61-residue stretch at 1–61 folds into the TGS domain; sequence MPVITLPDGS…ENDAQLSIIT (61 aa). The interval 243 to 534 is catalytic; that stretch reads DHRKIGKQLD…LTEEFAGFFP (292 aa). Lys286 carries the N6-acetyllysine modification. Residues Cys334, His385, and His511 each contribute to the Zn(2+) site.

Belongs to the class-II aminoacyl-tRNA synthetase family. Homodimer. Zn(2+) is required as a cofactor.

The protein resides in the cytoplasm. The catalysed reaction is tRNA(Thr) + L-threonine + ATP = L-threonyl-tRNA(Thr) + AMP + diphosphate + H(+). In terms of biological role, catalyzes the attachment of threonine to tRNA(Thr) in a two-step reaction: L-threonine is first activated by ATP to form Thr-AMP and then transferred to the acceptor end of tRNA(Thr). Also edits incorrectly charged L-seryl-tRNA(Thr). The protein is Threonine--tRNA ligase of Shigella flexneri serotype 5b (strain 8401).